The sequence spans 151 residues: Ribosome maturation factor RimP (151 aa).

This sequence belongs to the RimP family.

The protein resides in the cytoplasm. Required for maturation of 30S ribosomal subunits. The chain is Ribosome maturation factor RimP from Aliivibrio salmonicida (strain LFI1238) (Vibrio salmonicida (strain LFI1238)).